The sequence spans 843 residues: Adenylate cyclase (843 aa).

The catalytic stretch occupies residues Met-1–Ile-542. A regulatory region spans residues Ser-549–Lys-843.

This sequence belongs to the adenylyl cyclase class-1 family.

The protein localises to the cytoplasm. It carries out the reaction ATP = 3',5'-cyclic AMP + diphosphate. Functionally, plays an essential role in competence development. This is Adenylate cyclase (cyaA) from Haemophilus influenzae (strain ATCC 51907 / DSM 11121 / KW20 / Rd).